The following is a 272-amino-acid chain: 3-methyl-2-oxobutanoate hydroxymethyltransferase (272 aa).

D42 and D86 together coordinate Mg(2+). 3-methyl-2-oxobutanoate is bound by residues 42–43 (DS), D86, and K116. E118 is a binding site for Mg(2+). The Proton acceptor role is filled by E185.

Belongs to the PanB family. As to quaternary structure, homodecamer; pentamer of dimers. Mg(2+) serves as cofactor.

It localises to the cytoplasm. The enzyme catalyses 3-methyl-2-oxobutanoate + (6R)-5,10-methylene-5,6,7,8-tetrahydrofolate + H2O = 2-dehydropantoate + (6S)-5,6,7,8-tetrahydrofolate. It participates in cofactor biosynthesis; (R)-pantothenate biosynthesis; (R)-pantoate from 3-methyl-2-oxobutanoate: step 1/2. In terms of biological role, catalyzes the reversible reaction in which hydroxymethyl group from 5,10-methylenetetrahydrofolate is transferred onto alpha-ketoisovalerate to form ketopantoate. The chain is 3-methyl-2-oxobutanoate hydroxymethyltransferase from Prochlorococcus marinus (strain NATL1A).